We begin with the raw amino-acid sequence, 61 residues long: Sec-independent protein translocase protein TatA (61 aa).

The helical transmembrane segment at 2 to 22 threads the bilayer; that stretch reads GLSGISPLSLLLILAIIVALF.

Belongs to the TatA/E family. In terms of assembly, the Tat system comprises two distinct complexes: a TatABC complex, containing multiple copies of TatA, TatB and TatC subunits, and a separate TatA complex, containing only TatA subunits. Substrates initially bind to the TatABC complex, which probably triggers association of the separate TatA complex to form the active translocon.

The protein resides in the cell inner membrane. In terms of biological role, part of the twin-arginine translocation (Tat) system that transports large folded proteins containing a characteristic twin-arginine motif in their signal peptide across membranes. TatA could form the protein-conducting channel of the Tat system. This Legionella pneumophila (strain Paris) protein is Sec-independent protein translocase protein TatA.